The primary structure comprises 362 residues: Nuclear hormone receptor family member nhr-77 (362 aa).

Positions D8–Q82 form a DNA-binding region, nuclear receptor. 2 consecutive NR C4-type zinc fingers follow at residues C11–C32 and C48–C69. The NR LBD domain maps to E145–F362.

Belongs to the nuclear hormone receptor family.

The protein resides in the nucleus. Its function is as follows. Orphan nuclear receptor. This is Nuclear hormone receptor family member nhr-77 (nhr-77) from Caenorhabditis elegans.